The following is a 540-amino-acid chain: GMP synthase [glutamine-hydrolyzing] (540 aa).

Residues 24 to 217 enclose the Glutamine amidotransferase type-1 domain; the sequence is KILIVDFGSQ…VRKVAGLTGD (194 aa). The Nucleophile role is filled by Cys101. Residues His191 and Glu193 contribute to the active site. Residues 218 to 415 enclose the GMPS ATP-PPase domain; the sequence is WTMRAFREEA…LGLPEIFVGR (198 aa). 245–251 contributes to the ATP binding site; the sequence is SGGVDSS.

Homodimer.

It carries out the reaction XMP + L-glutamine + ATP + H2O = GMP + L-glutamate + AMP + diphosphate + 2 H(+). It functions in the pathway purine metabolism; GMP biosynthesis; GMP from XMP (L-Gln route): step 1/1. Catalyzes the synthesis of GMP from XMP. This is GMP synthase [glutamine-hydrolyzing] from Nitrobacter hamburgensis (strain DSM 10229 / NCIMB 13809 / X14).